The primary structure comprises 404 residues: RING-H2 finger protein ATL11 (404 aa).

Residues 1 to 36 form the signal peptide; it reads MNPKGRTNLNRSIIGGHDHGSILQLLLFLLLLSSHG. Residues 64 to 84 form a helical membrane-spanning segment; it reads AILMIVLVSVFFFLGFFSVYI. The RING-type; atypical zinc finger occupies 144–186; the sequence is CSVCLNEFEDDETLRLIPKCCHVFHPGCIDAWLRSHTTCPLCR. Disordered stretches follow at residues 339-361 and 385-404; these read PYRT…VRAS and VGEN…SNTV.

Belongs to the RING-type zinc finger family. ATL subfamily.

It localises to the membrane. It catalyses the reaction S-ubiquitinyl-[E2 ubiquitin-conjugating enzyme]-L-cysteine + [acceptor protein]-L-lysine = [E2 ubiquitin-conjugating enzyme]-L-cysteine + N(6)-ubiquitinyl-[acceptor protein]-L-lysine.. Its pathway is protein modification; protein ubiquitination. The protein is RING-H2 finger protein ATL11 (ATL11) of Arabidopsis thaliana (Mouse-ear cress).